A 473-amino-acid polypeptide reads, in one-letter code: ATP synthase subunit beta (473 aa).

ATP is bound at residue 158–165; that stretch reads GGAGVGKT.

It belongs to the ATPase alpha/beta chains family. F-type ATPases have 2 components, CF(1) - the catalytic core - and CF(0) - the membrane proton channel. CF(1) has five subunits: alpha(3), beta(3), gamma(1), delta(1), epsilon(1). CF(0) has three main subunits: a(1), b(2) and c(9-12). The alpha and beta chains form an alternating ring which encloses part of the gamma chain. CF(1) is attached to CF(0) by a central stalk formed by the gamma and epsilon chains, while a peripheral stalk is formed by the delta and b chains.

The protein localises to the cell membrane. The enzyme catalyses ATP + H2O + 4 H(+)(in) = ADP + phosphate + 5 H(+)(out). Produces ATP from ADP in the presence of a proton gradient across the membrane. The catalytic sites are hosted primarily by the beta subunits. This Geobacillus kaustophilus (strain HTA426) protein is ATP synthase subunit beta.